A 399-amino-acid polypeptide reads, in one-letter code: Glutathione S-transferase LANCL1 (399 aa).

A2 is subject to N-acetylalanine. The residue at position 142 (K142) is an N6-acetyllysine. A Zn(2+)-binding site is contributed by C276. Residue K317 participates in glutathione binding. Zn(2+)-binding residues include C322 and H323. Position 364 to 367 (364 to 367) interacts with glutathione; the sequence is RTPD.

It belongs to the LanC-like protein family. In terms of assembly, interacts with the C-terminal of STOM. Interacts with the EPS8 SH3 domain. Interaction with EPS8 is inhibited by glutathione binding. Expressed in brain.

It is found in the cytoplasm. Its subcellular location is the cell membrane. The enzyme catalyses RX + glutathione = an S-substituted glutathione + a halide anion + H(+). It carries out the reaction 1-chloro-2,4-dinitrobenzene + glutathione = 2,4-dinitrophenyl-S-glutathione + chloride + H(+). Functions as a glutathione transferase. Catalyzes conjugation of the glutathione (GSH) to artificial substrates 1-chloro-2,4-dinitrobenzene (CDNB) and p-nitrophenyl acetate. Mitigates neuronal oxidative stress during normal postnatal development and in response to oxidative stresses probably through GSH antioxidant defense mechanism. May play a role in EPS8 signaling. Binds glutathione. This chain is Glutathione S-transferase LANCL1 (LANCL1), found in Bos taurus (Bovine).